A 277-amino-acid chain; its full sequence is Large ribosomal subunit protein uL2 (277 aa).

A disordered region spans residues Asp-199–Ser-277.

The protein belongs to the universal ribosomal protein uL2 family. Part of the 50S ribosomal subunit. Forms a bridge to the 30S subunit in the 70S ribosome.

Its function is as follows. One of the primary rRNA binding proteins. Required for association of the 30S and 50S subunits to form the 70S ribosome, for tRNA binding and peptide bond formation. It has been suggested to have peptidyltransferase activity; this is somewhat controversial. Makes several contacts with the 16S rRNA in the 70S ribosome. In Mesorhizobium japonicum (strain LMG 29417 / CECT 9101 / MAFF 303099) (Mesorhizobium loti (strain MAFF 303099)), this protein is Large ribosomal subunit protein uL2.